The chain runs to 341 residues: Anthranilate phosphoribosyltransferase (341 aa).

5-phospho-alpha-D-ribose 1-diphosphate contacts are provided by residues glycine 79, 82–83, threonine 87, 89–92, 107–115, and serine 119; these read GD, NIST, and KHGGRSVSS. Position 79 (glycine 79) interacts with anthranilate. Position 91 (serine 91) interacts with Mg(2+). Residue arginine 165 participates in anthranilate binding. 2 residues coordinate Mg(2+): aspartate 224 and glutamate 225.

Belongs to the anthranilate phosphoribosyltransferase family. In terms of assembly, homodimer. Requires Mg(2+) as cofactor.

The enzyme catalyses N-(5-phospho-beta-D-ribosyl)anthranilate + diphosphate = 5-phospho-alpha-D-ribose 1-diphosphate + anthranilate. It functions in the pathway amino-acid biosynthesis; L-tryptophan biosynthesis; L-tryptophan from chorismate: step 2/5. Catalyzes the transfer of the phosphoribosyl group of 5-phosphorylribose-1-pyrophosphate (PRPP) to anthranilate to yield N-(5'-phosphoribosyl)-anthranilate (PRA). In Ruminiclostridium cellulolyticum (strain ATCC 35319 / DSM 5812 / JCM 6584 / H10) (Clostridium cellulolyticum), this protein is Anthranilate phosphoribosyltransferase.